A 548-amino-acid chain; its full sequence is (S)-beta-macrocarpene synthase (548 aa).

Residues Asp302 and Asp306 each contribute to the Mg(2+) site. Substrate is bound by residues Asp302, Asp306, Arg443, and Asn446. The DDXXD motif motif lies at 302-306 (DDTLD). The Mg(2+) site is built by Asn446, Ser450, and Glu454.

Belongs to the terpene synthase family. As to quaternary structure, monomer. The cofactor is Mg(2+). Requires Mn(2+) as cofactor. In terms of tissue distribution, expressed in roots. Not detected in leaves, unless damaged by herbivory or infected by fungi.

It localises to the cytoplasm. The catalysed reaction is (S)-beta-bisabolene = (S)-beta-macrocarpene. The enzyme catalyses (2E,6E)-farnesyl diphosphate = (S)-beta-bisabolene + diphosphate. It catalyses the reaction (2E)-geranyl diphosphate = (4S)-limonene + diphosphate. It carries out the reaction (2E)-geranyl diphosphate = beta-myrcene + diphosphate. The catalysed reaction is (2E)-geranyl diphosphate = terpinolene + diphosphate. The enzyme catalyses (2E)-geranyl diphosphate + H2O = (S)-linalool + diphosphate. It participates in secondary metabolite biosynthesis; terpenoid biosynthesis. Its function is as follows. Involved in the biosynthesis of the bicyclic sesquiterpene (S)-beta-macrocarpene. Can use both geranyl diphosphate and farnesyl diphosphate as substrate, but not geranylgeranyl diphosphate. Produces mainly (S)-beta-macrocarpene, but also smaller amounts of beta-bisabolene and (E)-beta-farnesene when used with farnesyl diphosphate as substrate. In the presence of geranyl diphosphate, produces the acyclic monoterpenes beta-myrcene and linalool along with minor amounts of the cyclic compounds limonene, alpha-thujene, sabinene and alpha-terpinolene. May be involved in plant defense. The polypeptide is (S)-beta-macrocarpene synthase (Zea mays (Maize)).